Consider the following 529-residue polypeptide: Cytochrome P450 monooxygenase fsoB (529 aa).

A helical transmembrane segment spans residues 4–24 (WLLSLLIAGVVFAIFQLRTVG). C436 is a binding site for heme.

This sequence belongs to the cytochrome P450 family. Heme is required as a cofactor.

The protein localises to the membrane. Functionally, cytochrome P450 monooxygenase; part of the gene cluster that mediates the biosynthesis of the enfumafungin-type antibiotic fuscoatroside. Four enzymes are sufficient to produce fuscoatroside: the terpene cyclase-glycosyl transferase fusion protein fsoAthe cytochrome P450 monoxygenases fsoD and fsoE, and the acetyltransferase fsoF; the cytochrome P450 monooxygenase fsoB and the glucose oxidase-like protein fsoC do not seem to play a role in biosynthesis of fuscoatroside. The chain is Cytochrome P450 monooxygenase fsoB from Humicola fuscoatra.